The sequence spans 1191 residues: Major DNA-binding protein (1191 aa).

The short motif at 820–821 is the Required for filament formation element; the sequence is FW. Disordered stretches follow at residues 1122–1146 and 1168–1191; these read TAAG…AADE and AGLI…RSRL. The span at 1127–1142 shows a compositional bias: gly residues; the sequence is AAGGGGSATEGGGGGA. Residues 1173 to 1191 are required for nuclear localization; the sequence is GDDVRGDDEFELPSKRSRL.

The protein belongs to the herpesviridae major DNA-binding protein family. As to quaternary structure, homooligomers. Forms double-helical filaments necessary for the formation of replication compartments within the host nucleus. Interacts with the origin-binding protein. Interacts with the helicase primase complex; this interaction stimulates primer synthesis activity of the helicase-primase complex. Interacts with the DNA polymerase. Interacts with the alkaline exonuclease; this interaction increases its nuclease processivity.

Its subcellular location is the host nucleus. Functionally, single-stranded DNA-binding protein required for DNA replication. Plays several crucial roles in viral infection. Participates in the opening of the viral DNA origin to initiate replication by interacting with the origin-binding protein. May disrupt loops, hairpins and other secondary structures present on ssDNA to reduce and eliminate pausing of viral DNA polymerase at specific sites during elongation. Promotes viral DNA recombination by performing strand-transfer, characterized by the ability to transfer a DNA strand from a linear duplex to a complementary single-stranded DNA circle. Can also catalyze the renaturation of complementary single strands. Additionally, reorganizes the host cell nucleus, leading to the formation of prereplicative sites and replication compartments. This process is driven by the protein which can form double-helical filaments in the absence of DNA. The polypeptide is Major DNA-binding protein (Mus musculus (Mouse)).